The primary structure comprises 289 residues: Protoheme IX farnesyltransferase (289 aa).

9 helical membrane passes run L13–A33, V40–F60, I85–L105, L111–F131, N139–G159, I168–L188, S212–P232, M234–Y254, and F269–I289.

The protein belongs to the UbiA prenyltransferase family. Protoheme IX farnesyltransferase subfamily.

It is found in the cell inner membrane. It catalyses the reaction heme b + (2E,6E)-farnesyl diphosphate + H2O = Fe(II)-heme o + diphosphate. It participates in porphyrin-containing compound metabolism; heme O biosynthesis; heme O from protoheme: step 1/1. Functionally, converts heme B (protoheme IX) to heme O by substitution of the vinyl group on carbon 2 of heme B porphyrin ring with a hydroxyethyl farnesyl side group. This Leptospira borgpetersenii serovar Hardjo-bovis (strain JB197) protein is Protoheme IX farnesyltransferase.